We begin with the raw amino-acid sequence, 211 residues long: Troponin I, cardiac muscle (211 aa).

The tract at residues 1–23 (MADESGDAAGCPPPAPAPIRRQS) is disordered. Residue alanine 2 is modified to N-acetylalanine. Serine 5 carries the post-translational modification Phosphoserine. Phosphoserine; by PKA and PKD/PRKD1 occurs at positions 23 and 24. Phosphotyrosine is present on tyrosine 27. Phosphothreonine; by STK4/MST1 is present on threonine 32. The segment at 33–80 (EPHAKKKSKISASRKLQLKTLMLQIAKQELEREAEERRGEKGRALSTR) is involved in binding TNC. A phosphoserine; by PKC/PRKCE mark is found at serine 43 and serine 45. Threonine 52 carries the post-translational modification Phosphothreonine; by STK4/MST1. Serine 78 is subject to Phosphoserine. Threonine 79 carries the post-translational modification Phosphothreonine. 2 positions are modified to phosphothreonine; by STK4/MST1: threonine 130 and threonine 144. Positions 130-150 (TQKIFDLRGKFKRPTLRRVRI) are involved in binding TNC and actin. A Phosphoserine; by PAK3 modification is found at serine 151. The residue at position 167 (serine 167) is a Phosphoserine. Residue threonine 182 is modified to Phosphothreonine. Serine 200 bears the Phosphoserine mark.

It belongs to the troponin I family. As to quaternary structure, binds to actin and tropomyosin. Interacts with TRIM63. Interacts with STK4/MST1. Phosphorylated at Ser-23 and Ser-24 by PRKD1; phosphorylation reduces myofilament calcium sensitivity. Phosphorylated preferentially at Thr-32. Phosphorylation by STK4/MST1 alters its binding affinity to TNNC1 (cardiac Tn-C) and TNNT2 (cardiac Tn-T). Phosphorylated at Ser-43 and Ser-45 by PRKCE; phosphorylation increases myocardium contractile dysfunction.

Functionally, troponin I is the inhibitory subunit of troponin, the thin filament regulatory complex which confers calcium-sensitivity to striated muscle actomyosin ATPase activity. This chain is Troponin I, cardiac muscle (TNNI3), found in Canis lupus familiaris (Dog).